The sequence spans 189 residues: Threonylcarbamoyl-AMP synthase (189 aa).

The YrdC-like domain occupies 9–189 (ASAQRKLSVY…IDGETGKRLR (181 aa)).

It belongs to the SUA5 family. TsaC subfamily.

The protein localises to the cytoplasm. It catalyses the reaction L-threonine + hydrogencarbonate + ATP = L-threonylcarbamoyladenylate + diphosphate + H2O. In terms of biological role, required for the formation of a threonylcarbamoyl group on adenosine at position 37 (t(6)A37) in tRNAs that read codons beginning with adenine. Catalyzes the conversion of L-threonine, HCO(3)(-)/CO(2) and ATP to give threonylcarbamoyl-AMP (TC-AMP) as the acyladenylate intermediate, with the release of diphosphate. This is Threonylcarbamoyl-AMP synthase from Neisseria meningitidis serogroup C (strain 053442).